The chain runs to 426 residues: Phosphoribosylamine--glycine ligase (426 aa).

The region spanning 113–320 (KSLMTEAKIP…LLELLYRAST (208 aa)) is the ATP-grasp domain. 139 to 200 (LESKSIPIVI…EEFMEGQEAS (62 aa)) contacts ATP. 2 residues coordinate Mg(2+): Glu290 and Asn292.

This sequence belongs to the GARS family. Mg(2+) serves as cofactor. The cofactor is Mn(2+).

The catalysed reaction is 5-phospho-beta-D-ribosylamine + glycine + ATP = N(1)-(5-phospho-beta-D-ribosyl)glycinamide + ADP + phosphate + H(+). The protein operates within purine metabolism; IMP biosynthesis via de novo pathway; N(1)-(5-phospho-D-ribosyl)glycinamide from 5-phospho-alpha-D-ribose 1-diphosphate: step 2/2. In Leptospira interrogans serogroup Icterohaemorrhagiae serovar Lai (strain 56601), this protein is Phosphoribosylamine--glycine ligase.